A 210-amino-acid polypeptide reads, in one-letter code: HTH-type transcriptional regulator MtrR (210 aa).

Residues 9-69 (LKTKEHLMLA…ALFQRICDDI (61 aa)) enclose the HTH tetR-type domain. A DNA-binding region (H-T-H motif) is located at residues 32-51 (SLNEIAQAAGVTRGALYWHF).

As to quaternary structure, homodimer. Binds to DNA as a pair of dimers.

DNA binding is affected significantly by increasing the NaCl concentration. Functionally, controls the permeability of the cell envelope to hydrophobic compounds such as antibiotics and detergents. Represses transcription of the mtrCDE-encoded efflux pump by binding within the mtrCDE promoter. Also negatively regulates the expression of farR, by binding to its promoter region, leading indirectly to the positive regulation of expression of the farAB-encoded efflux pump. This Neisseria gonorrhoeae protein is HTH-type transcriptional regulator MtrR.